The primary structure comprises 408 residues: Histidine--tRNA ligase (408 aa).

The protein belongs to the class-II aminoacyl-tRNA synthetase family. Homodimer.

Its subcellular location is the cytoplasm. It catalyses the reaction tRNA(His) + L-histidine + ATP = L-histidyl-tRNA(His) + AMP + diphosphate + H(+). The chain is Histidine--tRNA ligase from Campylobacter jejuni subsp. doylei (strain ATCC BAA-1458 / RM4099 / 269.97).